The chain runs to 430 residues: Adenylosuccinate synthetase (430 aa).

Residues 12–18 (GDEGKGK) and 40–42 (GHT) contribute to the GTP site. Asp13 acts as the Proton acceptor in catalysis. Mg(2+)-binding residues include Asp13 and Gly40. IMP contacts are provided by residues 13–16 (DEGK), 38–41 (NAGH), Thr128, Arg142, Gln223, Thr238, and Arg302. His41 acts as the Proton donor in catalysis. 298–304 (TTTGRPR) serves as a coordination point for substrate. Residues Arg304, 330 to 332 (SID), and 412 to 414 (SVG) each bind GTP.

It belongs to the adenylosuccinate synthetase family. Homodimer. Mg(2+) serves as cofactor.

The protein localises to the cytoplasm. The catalysed reaction is IMP + L-aspartate + GTP = N(6)-(1,2-dicarboxyethyl)-AMP + GDP + phosphate + 2 H(+). It participates in purine metabolism; AMP biosynthesis via de novo pathway; AMP from IMP: step 1/2. Its function is as follows. Plays an important role in the de novo pathway of purine nucleotide biosynthesis. Catalyzes the first committed step in the biosynthesis of AMP from IMP. This chain is Adenylosuccinate synthetase, found in Streptococcus uberis (strain ATCC BAA-854 / 0140J).